The primary structure comprises 126 residues: Holo-[acyl-carrier-protein] synthase (126 aa).

Residues Asp9 and Glu58 each contribute to the Mg(2+) site.

The protein belongs to the P-Pant transferase superfamily. AcpS family. The cofactor is Mg(2+).

It is found in the cytoplasm. It catalyses the reaction apo-[ACP] + CoA = holo-[ACP] + adenosine 3',5'-bisphosphate + H(+). Transfers the 4'-phosphopantetheine moiety from coenzyme A to a Ser of acyl-carrier-protein. The polypeptide is Holo-[acyl-carrier-protein] synthase (Hamiltonella defensa subsp. Acyrthosiphon pisum (strain 5AT)).